Reading from the N-terminus, the 387-residue chain is Large ribosomal subunit protein uL3 (387 aa).

It belongs to the universal ribosomal protein uL3 family.

Its subcellular location is the cytoplasm. In Kluyveromyces lactis (strain ATCC 8585 / CBS 2359 / DSM 70799 / NBRC 1267 / NRRL Y-1140 / WM37) (Yeast), this protein is Large ribosomal subunit protein uL3 (RPL3).